The sequence spans 220 residues: Adenylate kinase (220 aa).

ATP is bound at residue 10-15; sequence GAGKGT. The tract at residues 30–59 is NMP; it reads STGDMLRAAVKAGTPLGVEAKGYMDAGKLV. Residues T31, R36, 57–59, 85–88, and Q92 contribute to the AMP site; these read KLV and GFPR. The tract at residues 122–159 is LID; that stretch reads GRRTHPASGRTYHVKFNPPKVEGKDDVTGEPLIQRDDD. ATP is bound by residues R123 and 132–133; that span reads TY. Positions 156 and 167 each coordinate AMP. Position 206 (G206) interacts with ATP.

It belongs to the adenylate kinase family. Monomer.

It is found in the cytoplasm. The enzyme catalyses AMP + ATP = 2 ADP. It functions in the pathway purine metabolism; AMP biosynthesis via salvage pathway; AMP from ADP: step 1/1. In terms of biological role, catalyzes the reversible transfer of the terminal phosphate group between ATP and AMP. Plays an important role in cellular energy homeostasis and in adenine nucleotide metabolism. This Burkholderia multivorans (strain ATCC 17616 / 249) protein is Adenylate kinase.